Reading from the N-terminus, the 569-residue chain is MDTQRFVLFLIFATSLLFLWDAWQKEQYPATQGPKTAVQGTETQANTGTAGTAETPVPGDQLASSVPQRGSTAENGAPVRAAGKLESGDKITIKTDMVLAEIDTAGGDIRRLELLHQPSKEDKNKPFALLESDPERVYIAQSGLIGEGLPTHKTRFTAEPGAYELAAGQDKIQIRLSAPEVDGVQVTKIYTFHRGSYLIDVSFEVANQRNAAIQPFSYFQMLRDSRPPVGSFFMVPTYTGAALYTEEEKFRKIEFSALDKGNASYPKNADNGWIAMLQQYFLAAWLPKDKLPREYYAKRLGENEYTAGVIVPVGQIEPGSSATVTVPLYAGPEEQSKLASIAPGLDLVVDYGWLTVIGAPLFWLLSLFHSWTGNWGVAIILLTMSVKLAFFPLSAAGYRSMAKLRLVTPKLQRLREQHGNDRQRMHQAMMDFYKTEKINPMGGCLPILVQIPVFISLYWVLLSSVELRYASFALWIEDLSAPDPYYVLPVIMGISMFLQQRLSPPATDPIQARVMQIMPLAFSVFFFFFPAGLVLYSLVNNVLSIAQQWQITRMIEGSAANTSKQKKAN.

A helical membrane pass occupies residues 6–26 (FVLFLIFATSLLFLWDAWQKE). 2 stretches are compositionally biased toward polar residues: residues 32–52 (QGPKTAVQGTETQANTGTAGT) and 62–74 (LASSVPQRGSTAE). The disordered stretch occupies residues 32–81 (QGPKTAVQGTETQANTGTAGTAETPVPGDQLASSVPQRGSTAENGAPVRA). The next 5 helical transmembrane spans lie at 348-368 (VVDYGWLTVIGAPLFWLLSLF), 375-395 (WGVAIILLTMSVKLAFFPLSA), 442-462 (GGCLPILVQIPVFISLYWVLL), 479-499 (LSAPDPYYVLPVIMGISMFLQ), and 519-539 (PLAFSVFFFFFPAGLVLYSLV).

It belongs to the OXA1/ALB3/YidC family. Type 1 subfamily. As to quaternary structure, interacts with the Sec translocase complex via SecD. Specifically interacts with transmembrane segments of nascent integral membrane proteins during membrane integration.

Its subcellular location is the cell inner membrane. Required for the insertion and/or proper folding and/or complex formation of integral membrane proteins into the membrane. Involved in integration of membrane proteins that insert both dependently and independently of the Sec translocase complex, as well as at least some lipoproteins. Aids folding of multispanning membrane proteins. The protein is Membrane protein insertase YidC of Nitrosospira multiformis (strain ATCC 25196 / NCIMB 11849 / C 71).